Consider the following 599-residue polypeptide: Dictomallein-2 (599 aa).

Positions 1 to 20 (MKLILIYLILVFNLFNFINC) are cleaved as a signal peptide. One can recognise a Peptidase M66 domain in the interval 145 to 407 (PDVGQDYTLK…QNYFKNSIYY (263 aa)). Residue H298 coordinates Zn(2+). Residue E299 is part of the active site. Residues H302 and H308 each coordinate Zn(2+).

This sequence belongs to the dictomallein family. Zn(2+) serves as cofactor.

The protein localises to the secreted. The sequence is that of Dictomallein-2 (dtmlB) from Dictyostelium discoideum (Social amoeba).